A 553-amino-acid chain; its full sequence is PE cleavage protein A (553 aa).

The PE domain maps to M1–A92. Residue D293 is part of the active site.

The protein belongs to the mycobacterial PE family. PGRS subfamily. In terms of processing, undergoes auto-proteolytic processing.

Its subcellular location is the secreted. The protein resides in the cell surface. Aspartic protease that processes the lipase LipY and other PE_PGRS proteins. Can also cleave itself. Cleaves LipY both inside the PE domain, before amino acid 98, and after amino acids 136 and 149. Involved in virulence. This Mycobacterium marinum (strain ATCC BAA-535 / M) protein is PE cleavage protein A.